Consider the following 409-residue polypeptide: Lysosome-associated membrane glycoprotein 1 (409 aa).

Positions 1 to 25 (MAAPGGARRRPLLLLLFAGLVHGAS) are cleaved as a signal peptide. Positions 26–187 (AVFVVKNGNG…SNFSREETRC (162 aa)) are first lumenal domain. Over 26–374 (AVFVVKNGNG…EECQLDENSM (349 aa)) the chain is Lumenal. N-linked (GlcNAc...) asparagine glycans are attached at residues Asn34, Asn59, Asn72, Asn80, Asn103, Asn117, Asn126, Asn146, Asn161, and Asn179. Cys38 and Cys76 are disulfide-bonded. Residues Cys151 and Cys187 are joined by a disulfide bond. Positions 180 to 207 (FSREETRCEQDLPTPTTPPQPAPTPAPA) are disordered. Residues 188–219 (EQDLPTPTTPPQPAPTPAPASPAVFRYNVSGS) form a hinge region. The span at 194-207 (PTTPPQPAPTPAPA) shows a compositional bias: pro residues. 8 N-linked (GlcNAc...) asparagine glycosylation sites follow: Asn215, Asn220, Asn241, Asn253, Asn260, Asn285, Asn299, and Asn314. The tract at residues 220-374 (NGTCLLASMG…EECQLDENSM (155 aa)) is second lumenal domain. Cys223 and Cys261 are joined by a disulfide. Cys330 and Cys367 are disulfide-bonded. Residues 375–398 (LIPIAVGGALAGLVLIVLLAYLIG) form a helical membrane-spanning segment. The Cytoplasmic segment spans residues 399–409 (RKRSHAGYQTI).

This sequence belongs to the LAMP family. As to quaternary structure, interacts with ABCB9; this interaction strongly stabilizes ABCB9 and protects ABCB9 against lysosomal degradation. Interacts with FURIN. Interacts with TMEM175; inhibiting the proton channel activity of TMEM175. Post-translationally, O- and N-glycosylated; some of the N-glycans attached to LAMP-1 are polylactosaminoglycans.

Its subcellular location is the lysosome membrane. It is found in the endosome membrane. The protein resides in the late endosome membrane. It localises to the cell membrane. The protein localises to the cytolytic granule membrane. In terms of biological role, lysosomal membrane glycoprotein which plays an important role in lysosome biogenesis, lysosomal pH regulation, autophagy and cholesterol homeostasis. Acts as an important regulator of lysosomal lumen pH regulation by acting as a direct inhibitor of the proton channel TMEM175, facilitating lysosomal acidification for optimal hydrolase activity. Also plays an important role in NK-cells cytotoxicity. Mechanistically, participates in cytotoxic granule movement to the cell surface and perforin trafficking to the lytic granule. In addition, protects NK-cells from degranulation-associated damage induced by their own cytotoxic granule content. Presents carbohydrate ligands to selectins. This chain is Lysosome-associated membrane glycoprotein 1 (LAMP1), found in Bos taurus (Bovine).